We begin with the raw amino-acid sequence, 548 residues long: Poly(ADP-ribose) glycohydrolase 1 (548 aa).

Belongs to the poly(ADP-ribose) glycohydrolase family.

The catalysed reaction is [(1''-&gt;2')-ADP-alpha-D-ribose](n) + H2O = [(1''-&gt;2')-ADP-alpha-D-ribose](n-1) + ADP-D-ribose. Functionally, poly(ADP-ribose) synthesized after DNA damage is only present transiently and is rapidly degraded by poly(ADP-ribose) glycohydrolase. Involved in establishing period length of the circadian oscillator. May regulate post-translational poly(ADP-ribosyl)ation of an oscillator component. The polypeptide is Poly(ADP-ribose) glycohydrolase 1 (PARG1) (Arabidopsis thaliana (Mouse-ear cress)).